The following is a 314-amino-acid chain: NAD-dependent protein lipoamidase sirtuin-4, mitochondrial (314 aa).

The N-terminal 28 residues, 1–28, are a transit peptide targeting the mitochondrion; that stretch reads MKMSFALTFRSAKGRWIANPSQPCSKAS. The 278-residue stretch at 37 to 314 folds into the Deacetylase sirtuin-type domain; that stretch reads PPLDPEKVKE…GELLPLIDPC (278 aa). NAD(+) is bound by residues 62-82 and 143-146; these read GAGI…VGLY and QNVD. H161 serves as the catalytic Proton acceptor. 4 residues coordinate Zn(2+): C169, C172, C220, and C223. NAD(+)-binding positions include 260–262, 286–288, and C304; these read GSS and NIG.

The protein belongs to the sirtuin family. Class II subfamily. As to quaternary structure, interacts with GLUD1, IDE and SLC25A5. Interacts with DLAT and PDHX. Interacts with MCCC1 (via the biotin carboxylation domain). Interacts with PCCA and PC. Requires Zn(2+) as cofactor. As to expression, detected in vascular smooth muscle and striated muscle. Detected in insulin-producing beta-cells in pancreas islets of Langerhans (at protein level). Widely expressed. Weakly expressed in leukocytes and fetal thymus.

Its subcellular location is the mitochondrion matrix. The enzyme catalyses N(6)-[(R)-lipoyl]-L-lysyl-[protein] + NAD(+) + H2O = 2''-O-lipoyl-ADP-D-ribose + nicotinamide + L-lysyl-[protein]. It carries out the reaction N(6)-biotinyl-L-lysyl-[protein] + NAD(+) + H2O = 2''-O-biotinyl-ADP-D-ribose + nicotinamide + L-lysyl-[protein]. It catalyses the reaction N(6)-acetyl-L-lysyl-[protein] + NAD(+) + H2O = 2''-O-acetyl-ADP-D-ribose + nicotinamide + L-lysyl-[protein]. The catalysed reaction is L-cysteinyl-[protein] + NAD(+) = S-(ADP-D-ribosyl)-L-cysteinyl-[protein] + nicotinamide + H(+). In terms of biological role, acts as a NAD-dependent protein lipoamidase, biotinylase, deacetylase and ADP-ribosyl transferase. Catalyzes more efficiently removal of lipoyl- and biotinyl- than acetyl-lysine modifications. Inhibits the pyruvate dehydrogenase complex (PDH) activity via the enzymatic hydrolysis of the lipoamide cofactor from the E2 component, DLAT, in a phosphorylation-independent manner. Catalyzes the transfer of ADP-ribosyl groups onto target proteins, including mitochondrial GLUD1, inhibiting GLUD1 enzyme activity. Acts as a negative regulator of mitochondrial glutamine metabolism by mediating mono ADP-ribosylation of GLUD1: expressed in response to DNA damage and negatively regulates anaplerosis by inhibiting GLUD1, leading to block metabolism of glutamine into tricarboxylic acid cycle and promoting cell cycle arrest. In response to mTORC1 signal, SIRT4 expression is repressed, promoting anaplerosis and cell proliferation. Acts as a tumor suppressor. Also acts as a NAD-dependent protein deacetylase: mediates deacetylation of 'Lys-471' of MLYCD, inhibiting its activity, thereby acting as a regulator of lipid homeostasis. Does not seem to deacetylate PC. Controls fatty acid oxidation by inhibiting PPARA transcriptional activation. Impairs SIRT1-PPARA interaction probably through the regulation of NAD(+) levels. Down-regulates insulin secretion. This is NAD-dependent protein lipoamidase sirtuin-4, mitochondrial from Homo sapiens (Human).